We begin with the raw amino-acid sequence, 269 residues long: Aquaporin-1 (269 aa).

Over 2–11 (ASEFKKKLFW) the chain is Cytoplasmic. The chain crosses the membrane as a helical span at residues 12 to 29 (RAVVAEFLATTLFVFISI). The Extracellular segment spans residues 30-46 (GSALGFKYPVGNNQTAV). N-linked (GlcNAc...) asparagine glycosylation is present at asparagine 42. The helical transmembrane segment at 47–65 (QDNVKVSLAFGLSIATLAQ) threads the bilayer. Over 66–68 (SVG) the chain is Cytoplasmic. An intramembrane segment occupies 69–82 (HISGAHLNPAVTLG). The NPA 1 signature appears at 76-78 (NPA). Over 83–90 (LLLSCQIS) the chain is Cytoplasmic. The helical transmembrane segment at 91 to 109 (IFRALMYIIAQCVGAIVAT) threads the bilayer. At 110-133 (AILSGITSSLTGNSLGRNDLADGV) the chain is on the extracellular side. Residues 134 to 153 (NSGQGLGIEIIGTLQLVLCV) traverse the membrane as a helical segment. At 154–163 (LATTDRRRRD) the chain is on the cytoplasmic side. Residues 164–181 (LGGSAPLAIGLSVALGHL) form a helical membrane-spanning segment. Residues 182–186 (LAIDY) are Extracellular-facing. The stretch at 187–199 (TGCGINPARSFGS) is an intramembrane region. An NPA 2 motif is present at residues 192-194 (NPA). Residues 200–206 (AVITHNF) are Extracellular-facing. N-linked (GlcNAc...) asparagine glycosylation is present at asparagine 205. Residues 207-224 (SNHWIFWVGPFIGGALAV) traverse the membrane as a helical segment. Topologically, residues 225–269 (LIYDFILAPRSSDLTDRVKVWTSGQVEEYDLDADDINSRVEMKPK) are cytoplasmic. A Phosphoserine modification is found at serine 247. Tyrosine 253 is modified (phosphotyrosine). At serine 262 the chain carries Phosphoserine.

The protein belongs to the MIP/aquaporin (TC 1.A.8) family. Homotetramer; each monomer provides an independent water pore. Component of the ankyrin-1 complex in the erythrocyte, composed of ANK1, RHCE, RHAG, SLC4A1, EPB42, GYPA, GYPB and AQP1. Interacts with EPHB2; involved in endolymph production in the inner ear. Identified in a complex with STOM. Interacts (via the N-terminal) with ANK1 (via ANK 1-5 repeats). Interacts (via the C-terminal) with EPB42. Detected in erythrocytes (at protein level). Expressed in a number of tissues including erythrocytes, renal tubules, retinal pigment epithelium, heart, lung, skeletal muscle, kidney and pancreas. Weakly expressed in brain, placenta and liver.

It is found in the cell membrane. It catalyses the reaction H2O(in) = H2O(out). It carries out the reaction nitric oxide(out) = nitric oxide(in). The enzyme catalyses CO2(out) = CO2(in). The catalysed reaction is glycerol(in) = glycerol(out). It catalyses the reaction H2O2(out) = H2O2(in). It carries out the reaction K(+)(in) = K(+)(out). The enzyme catalyses Na(+)(in) = Na(+)(out). With respect to regulation, the water channel activity is inhibited by P-choloromercuribenzene sulphonate and diethylpyrocarbonate(DPPC). The glycerol channel activity is inhibited by P-choloromercuribenzene sulphonate, diethylpyrocarbonate(DPPC), phloretin and Cu(2+). Inhibited by mercury. Functionally, forms a water channel that facilitates the transport of water across cell membranes, playing a crucial role in water homeostasis in various tissues. Could also be permeable to small solutes including hydrogen peroxide, glycerol and gases such as amonnia (NH3), nitric oxide (NO) and carbon dioxide (CO2). Recruited to the ankyrin-1 complex, a multiprotein complex of the erythrocyte membrane, it could be part of a CO2 metabolon, linking facilitated diffusion of CO2 across the membrane, anion exchange of Cl(-)/HCO3(-) and interconversion of dissolved CO2 and carbonic acid in the cytosol. In vitro, it shows non-selective gated cation channel activity and may be permeable to cations like K(+) and Na(+) in vivo. The sequence is that of Aquaporin-1 from Homo sapiens (Human).